The primary structure comprises 550 residues: Methyl-accepting chemotaxis protein PcaY (550 aa).

Topologically, residues 1–19 are cytoplasmic; the sequence is MVPTRSTARMLANLKIRTG. Residues 20–40 form a helical membrane-spanning segment; it reads MFWVLSLFSLTLLFSTASAWW. The Periplasmic portion of the chain corresponds to 41 to 198; sequence AALGSDQQIT…ESDRRLARAQ (158 aa). A ligand-binding domain region spans residues 44-196; it reads GSDQQITELD…MLESDRRLAR (153 aa). Positions 71 and 75 each coordinate benzoate. Residues Arg71, Asn75, and Tyr135 each coordinate salicylate. 71 to 78 contributes to the 3,4-dihydroxybenzoate binding site; that stretch reads RSSANVSS. Residues 71–78, Tyr135, Gln142, and Asn158 contribute to the L-quinate site; that span reads RSSANVSS. Residue Gln169 participates in 3,4-dihydroxybenzoate binding. The helical transmembrane segment at 199-219 threads the bilayer; sequence LLSLCLLGVTVVLAVLCWAFI. Residues 220–550 lie on the Cytoplasmic side of the membrane; sequence AQRVLHPLRE…MTALVGRFKV (331 aa). The HAMP domain maps to 221–273; that stretch reads QRVLHPLREAGGHFRRIASGDLSVPVQGQGNNEIGQLFHELQRMQQSQRDTLG. Residues 278–514 form the Methyl-accepting transducer domain; it reads CARQLDAAAT…EVDRNLLNIR (237 aa).

Belongs to the methyl-accepting chemotaxis (MCP) protein family. As to quaternary structure, ligand free PcaY_PP-ligand-binding domain (LBD) is present in a monomer-dimer equilibrium. Only the dimeric LBD is able to bind ligands which in turn causes dimer stabilization.

The protein resides in the cell inner membrane. Chemotactic-signal transducers respond to changes in the concentration of attractants and repellents in the environment, transduce a signal from the outside to the inside of the cell, and facilitate sensory adaptation through the variation of the level of methylation. PcaY recognizes a wide range of compounds containing a C6-membered ring with a carboxylate group. Binds preferentially compounds that serve as carbon sources and among them those that rapidly promote growth. Tightest binding compounds are quinate, shikimate, 3-dehydroshikimate and protocatechuate, which are at the interception of the biosynthetic shikimate and catabolic quinate pathways. The sequence is that of Methyl-accepting chemotaxis protein PcaY from Pseudomonas putida (strain ATCC 47054 / DSM 6125 / CFBP 8728 / NCIMB 11950 / KT2440).